Consider the following 2448-residue polypeptide: Cysteine repeat modular protein 1 (2448 aa).

A helical transmembrane segment spans residues 9-29 (TSTNLLNIFALYFSAICFIYC). N-linked (GlcNAc...) asparagine glycans are attached at residues Asn-48, Asn-89, Asn-248, Asn-284, Asn-461, Asn-503, Asn-542, Asn-598, and Asn-619. FU repeat units lie at residues 431–481 (KNTC…GYYF), 485–530 (FMQC…GFYI), 535–566 (NFKCEKCNASCLSCTGPSFDQCLSCKSGFYLS), and 567–611 (SNTC…GQFA). FU repeat units lie at residues 645–694 (NNQC…GYFP), 698–727 (TSVCQACQGKCKTCTSSNTCSSCINGYYLQ), 728–772 (DSNC…GTFG), 775–813 (QNICQTCIDGCQTCYGPTLLECYSCEQGFFFQAFQITNN), 819–868 (KGMC…YYLS), 904–947 (GRVC…GFPD), 950–983 (QNVCVACHPTCVTCQGPLATDCLTCISGYYLNPA), 984–1027 (NNIC…RTYP), 1063–1109 (QGAC…NQYV), and 1113–1144 (QNRCLPCFYSCSSCFGPNSNQCFSCQPNGFYL). 2 N-linked (GlcNAc...) asparagine glycosylation sites follow: Asn-761 and Asn-812. Residue Asn-934 is glycosylated (N-linked (GlcNAc...) asparagine). Residue Asn-1002 is glycosylated (N-linked (GlcNAc...) asparagine). Asn-1146 is a glycosylation site (N-linked (GlcNAc...) asparagine). One copy of the FU 15 repeat lies at 1147-1193 (QTQCSICDISCLQCSGPGFDSCIQCAQGYYKLGDSVCVQSCPDGFFL). Residue Asn-1194 is glycosylated (N-linked (GlcNAc...) asparagine). 5 FU repeats span residues 1197–1232 (NNQCQSCNQVCFNCNGPQNSDCTSCAAGYYQSISNQ), 1234–1279 (GIIC…GYRS), 1281–1332 (KGVC…GTFQ), 1346–1394 (SYYC…GFIL), and 1402–1436 (NQYCKVCKINCVSCIQQFFYYQENCYSSCPVGTVQ). 3 N-linked (GlcNAc...) asparagine glycosylation sites follow: Asn-1296, Asn-1328, and Asn-1365. 4 N-linked (GlcNAc...) asparagine glycosylation sites follow: Asn-1506, Asn-1601, Asn-1628, and Asn-1670. One can recognise an EGF-like domain in the interval 1739-1773 (SDISCSLNLCMNSGKCVPNSIFCSCPSAFTGPKCQ). 3 disulfide bridges follow: Cys-1743/Cys-1754, Cys-1748/Cys-1761, and Cys-1763/Cys-1772. 7 N-linked (GlcNAc...) asparagine glycosylation sites follow: Asn-1800, Asn-1849, Asn-1877, Asn-1942, Asn-2117, Asn-2155, and Asn-2179. 2 consecutive transmembrane segments (helical) span residues 2201–2221 (LYIMIIISLGIGAAFLGYSAI) and 2238–2258 (IYFLYYFPIISFLVGPTNQFV). Asn-2260 carries N-linked (GlcNAc...) asparagine glycosylation. Transmembrane regions (helical) follow at residues 2267–2287 (SLTIIASHFAFSSIYVQILPF), 2296–2316 (ILTSIITVSSTSVCIYWTIGV), 2352–2372 (MIGLVLAVLALISISVFIGLC), and 2386–2406 (AVFLIDLIADAIVVFILIIVG).

The protein resides in the membrane. In terms of biological role, required for mucocyst secretion. The protein is Cysteine repeat modular protein 1 of Tetrahymena thermophila (strain SB210).